We begin with the raw amino-acid sequence, 489 residues long: MKYKSIGNVETKYYQIPEELVLESGKKISDVTLAYETYGTLNWDKSNAILVCHALTGDAHAAGWHEGDRKPGWWDIIIGPGKALDTRKYFIICSNVIGGCKGSTGPSSINPDTGESYGLDFPVVTIKDMVNAQKKLIDYLGISKLLAVIGGSMGGLQVLQWSVSYPDMVKKAIPIATAGYSTPQQIAFNEVGRIAIVSDPNWNSGNYYGEKEPTHGLALARMIGHITYLSDDSMHQKFGRRLQDKNEYEFDFSREFEVESYLHYQGLTFTERFDANSYLYLTKAIDYFDLTENNSLAEGLKNVEAKFLVISFTSDWLYPPYQLREIVMALSANNADVTYREIESNYGHDSFLLESGQLNYVLNNFLSHTYVSDIMIEDIATIKEGISIDEAARVMFEKEITHLPLVSSDSKLVGLVTSWDISKSIALKSDNLEEIMTKNVVTARPDEPIEKAAEKMESKDISALPVIDKDRRVIGMVTSEDISRLIEEF.

Residues 47–354 (NAILVCHALT…NYGHDSFLLE (308 aa)) enclose the AB hydrolase-1 domain. The Nucleophile role is filled by serine 152. A substrate-binding site is contributed by arginine 221. Residues aspartate 315 and histidine 348 contribute to the active site. Aspartate 349 serves as a coordination point for substrate. 2 CBS domains span residues 375–434 (MIED…NLEE) and 436–489 (MTKN…IEEF).

The protein belongs to the AB hydrolase superfamily. MetX family. As to quaternary structure, homodimer.

The protein resides in the cytoplasm. The catalysed reaction is L-homoserine + acetyl-CoA = O-acetyl-L-homoserine + CoA. It participates in amino-acid biosynthesis; L-methionine biosynthesis via de novo pathway; O-acetyl-L-homoserine from L-homoserine: step 1/1. Its function is as follows. Transfers an acetyl group from acetyl-CoA to L-homoserine, forming acetyl-L-homoserine. This Methanohalobium evestigatum (strain ATCC BAA-1072 / DSM 3721 / NBRC 107634 / OCM 161 / Z-7303) protein is Homoserine O-acetyltransferase.